The chain runs to 616 residues: Chaperone protein HscA (616 aa).

The protein belongs to the heat shock protein 70 family.

Its function is as follows. Chaperone involved in the maturation of iron-sulfur cluster-containing proteins. Has a low intrinsic ATPase activity which is markedly stimulated by HscB. Involved in the maturation of IscU. This Citrobacter koseri (strain ATCC BAA-895 / CDC 4225-83 / SGSC4696) protein is Chaperone protein HscA.